A 101-amino-acid chain; its full sequence is Small ribosomal subunit protein uS14 (101 aa).

This sequence belongs to the universal ribosomal protein uS14 family. In terms of assembly, part of the 30S ribosomal subunit. Contacts proteins S3 and S10.

Functionally, binds 16S rRNA, required for the assembly of 30S particles and may also be responsible for determining the conformation of the 16S rRNA at the A site. The chain is Small ribosomal subunit protein uS14 from Xylella fastidiosa (strain M23).